Reading from the N-terminus, the 587-residue chain is Arginine--tRNA ligase (587 aa).

Residues 127–137 carry the 'HIGH' region motif; that stretch reads PNLAKEMHVGH.

It belongs to the class-I aminoacyl-tRNA synthetase family. Monomer.

The protein resides in the cytoplasm. The catalysed reaction is tRNA(Arg) + L-arginine + ATP = L-arginyl-tRNA(Arg) + AMP + diphosphate. In Pseudomonas aeruginosa (strain ATCC 15692 / DSM 22644 / CIP 104116 / JCM 14847 / LMG 12228 / 1C / PRS 101 / PAO1), this protein is Arginine--tRNA ligase.